The following is a 346-amino-acid chain: MAKRKLTQNQTRRIQSNNAKTLHRHKKKDIEWSDEMLGESQEGVVVTRYSIHADVENEQGEIYRCNLRRTLSSLVVGDKVVWRKGNEQLQGVSGVIEAIHPRENEISRPDYYDGLKPIAANIDRIIIVSAVLPTLSLNIIDRYLVVCEIAGITPLIVLNKVDLLAQEQRQEIEDQLKIYQDIGYEILMISAKSGENMEKLTALLAQGTAIFVGQSGVGKSSLINHILPSVNAQVGDVSETSGLGQHTTTSSRLYHLPQGGNLIDSPGIREFGLWHLDAEQITKGYREFQYVLGTCKFRDCKHLSDPGCALREAVEQGKISPVRYDNYHRLIESLSETKSQRHFSLV.

Residues 1–26 (MAKRKLTQNQTRRIQSNNAKTLHRHK) are disordered. The span at 7 to 20 (TQNQTRRIQSNNAK) shows a compositional bias: polar residues. The CP-type G domain occupies 103–271 (ENEISRPDYY…LIDSPGIREF (169 aa)). Residues 159-162 (NKVD) and 213-221 (GQSGVGKSS) contribute to the GTP site. C295, C300, H302, and C308 together coordinate Zn(2+).

This sequence belongs to the TRAFAC class YlqF/YawG GTPase family. RsgA subfamily. Monomer. Associates with 30S ribosomal subunit, binds 16S rRNA. Requires Zn(2+) as cofactor.

The protein localises to the cytoplasm. In terms of biological role, one of several proteins that assist in the late maturation steps of the functional core of the 30S ribosomal subunit. Helps release RbfA from mature subunits. May play a role in the assembly of ribosomal proteins into the subunit. Circularly permuted GTPase that catalyzes slow GTP hydrolysis, GTPase activity is stimulated by the 30S ribosomal subunit. The chain is Small ribosomal subunit biogenesis GTPase RsgA from Haemophilus influenzae (strain PittEE).